The primary structure comprises 522 residues: Glutamate--cysteine ligase, chloroplastic (522 aa).

Residues 1-45 constitute a chloroplast transit peptide; it reads MALMSQAGSSHCIYSEKMKCISGHSSITSNMEMLKMKDICFGNIS. Cysteine 186 and cysteine 406 form a disulfide bridge.

Belongs to the carboxylate-amine ligase family. Glutamate--cysteine ligase type 2 subfamily. In terms of assembly, homodimer or monomer when oxidized or reduced, respectively. In terms of processing, the Cys-186-Cys-406 disulfide bridge is known to modulate the enzyme activity according to the redox status. The oxidized form constitutes the active enzyme.

It is found in the plastid. It localises to the chloroplast. The enzyme catalyses L-cysteine + L-glutamate + ATP = gamma-L-glutamyl-L-cysteine + ADP + phosphate + H(+). The protein operates within sulfur metabolism; glutathione biosynthesis; glutathione from L-cysteine and L-glutamate: step 1/2. The chain is Glutamate--cysteine ligase, chloroplastic (GSH1) from Nicotiana tabacum (Common tobacco).